Reading from the N-terminus, the 188-residue chain is Elongation factor P (188 aa).

Residue Lys34 is modified to N6-(3,6-diaminohexanoyl)-5-hydroxylysine.

Belongs to the elongation factor P family. Post-translationally, may be beta-lysylated on the epsilon-amino group of Lys-34 by the combined action of EpmA and EpmB, and then hydroxylated on the C5 position of the same residue by EpmC (if this protein is present). Lysylation is critical for the stimulatory effect of EF-P on peptide-bond formation. The lysylation moiety may extend toward the peptidyltransferase center and stabilize the terminal 3-CCA end of the tRNA. Hydroxylation of the C5 position on Lys-34 may allow additional potential stabilizing hydrogen-bond interactions with the P-tRNA.

Its subcellular location is the cytoplasm. It participates in protein biosynthesis; polypeptide chain elongation. Involved in peptide bond synthesis. Alleviates ribosome stalling that occurs when 3 or more consecutive Pro residues or the sequence PPG is present in a protein, possibly by augmenting the peptidyl transferase activity of the ribosome. Modification of Lys-34 is required for alleviation. This is Elongation factor P from Xanthomonas oryzae pv. oryzae (strain MAFF 311018).